A 123-amino-acid chain; its full sequence is Protein Wnt-3b (123 aa).

The O-palmitoleoyl serine; by PORCN moiety is linked to residue S1. Cysteines 89 and 104 form a disulfide. N90 carries an N-linked (GlcNAc...) asparagine glycan.

Belongs to the Wnt family. Post-translationally, palmitoleoylation is required for efficient binding to frizzled receptors. Depalmitoleoylation leads to Wnt signaling pathway inhibition.

It localises to the secreted. The protein localises to the extracellular space. The protein resides in the extracellular matrix. Ligand for members of the frizzled family of seven transmembrane receptors. Probable developmental protein. May be a signaling molecule which affects the development of discrete regions of tissues. Is likely to signal over only few cell diameters. This is Protein Wnt-3b (WNT3B) from Meleagris gallopavo (Wild turkey).